Reading from the N-terminus, the 101-residue chain is NADH-quinone oxidoreductase subunit K (101 aa).

3 helical membrane-spanning segments follow: residues 4 to 24, 30 to 50, and 61 to 81; these read LGHY…GIFL, IVLL…FVAF, and VFVF…LAIL.

Belongs to the complex I subunit 4L family. As to quaternary structure, NDH-1 is composed of 14 different subunits. Subunits NuoA, H, J, K, L, M, N constitute the membrane sector of the complex.

It localises to the cell inner membrane. The enzyme catalyses a quinone + NADH + 5 H(+)(in) = a quinol + NAD(+) + 4 H(+)(out). Its function is as follows. NDH-1 shuttles electrons from NADH, via FMN and iron-sulfur (Fe-S) centers, to quinones in the respiratory chain. The immediate electron acceptor for the enzyme in this species is believed to be ubiquinone. Couples the redox reaction to proton translocation (for every two electrons transferred, four hydrogen ions are translocated across the cytoplasmic membrane), and thus conserves the redox energy in a proton gradient. The protein is NADH-quinone oxidoreductase subunit K of Leptothrix cholodnii (strain ATCC 51168 / LMG 8142 / SP-6) (Leptothrix discophora (strain SP-6)).